A 141-amino-acid polypeptide reads, in one-letter code: Nucleoside diphosphate kinase (141 aa).

Lys9, Phe57, Arg85, Thr91, Arg102, and Asn112 together coordinate ATP. The active-site Pros-phosphohistidine intermediate is His115.

The protein belongs to the NDK family. Homotetramer. Requires Mg(2+) as cofactor.

The protein resides in the cytoplasm. The catalysed reaction is a 2'-deoxyribonucleoside 5'-diphosphate + ATP = a 2'-deoxyribonucleoside 5'-triphosphate + ADP. It carries out the reaction a ribonucleoside 5'-diphosphate + ATP = a ribonucleoside 5'-triphosphate + ADP. In terms of biological role, major role in the synthesis of nucleoside triphosphates other than ATP. The ATP gamma phosphate is transferred to the NDP beta phosphate via a ping-pong mechanism, using a phosphorylated active-site intermediate. The polypeptide is Nucleoside diphosphate kinase (Prosthecochloris aestuarii (strain DSM 271 / SK 413)).